Here is an 816-residue protein sequence, read N- to C-terminus: Protein kinase C-binding protein NELL2 (816 aa).

Positions 1–21 (MESRVLLRTFCLIFGLGAVWG) are cleaved as a signal peptide. N53, N225, N293, and N298 each carry an N-linked (GlcNAc...) asparagine glycan. One can recognise a Laminin G-like domain in the interval 64–228 (PRSIKASTAT…AQCPDLNRTC (165 aa)). A VWFC 1 domain is found at 272 to 331 (RTCTMKGTTYREFESWIDGCKNCTCLNGTIQCETLICPNPDCPLKSALAYVDGKCCKECK). The region spanning 397 to 439 (GYDFCSERHNCMENSICRNLNDRAVCSCRDGFRALREDNAYCE) is the EGF-like 1 domain. 3 cysteine pairs are disulfide-bonded: C401/C413, C407/C422, and C424/C438. 3 residues coordinate Ca(2+): D440, I441, and E443. Residues 440 to 481 (DIDECAEGRHYCRENTMCVNTPGSFMCICKTGYIRIDDYSCT) enclose the EGF-like 2; calcium-binding domain. Cystine bridges form between C444–C457, C451–C466, C468–C480, C486–C499, C493–C508, C510–C521, C525–C535, C529–C541, and C543–C552. Ca(2+) contacts are provided by N459, T460, and S463. Residues 482–522 (EHDECITNQHNCDENALCFNTVGGHNCVCKPGYTGNGTTCK) form the EGF-like 3; calcium-binding domain. N517 carries an N-linked (GlcNAc...) asparagine glycan. The EGF-like 4 domain maps to 523-553 (AFCKDGCRNGGACIAANVCACPQGFTGPSCE). O-linked (GlcNAc...) threonine glycosylation is present at T548. The Ca(2+) site is built by D555, I556, and E558. The EGF-like 5; calcium-binding domain maps to 555–601 (DIDECSDGFVQCDSRANCINLPGWYHCECRDGYHDNGMFSPSGESCE). 3 disulfides stabilise this stretch: C559–C572, C566–C581, and C583–C600. The Ca(2+) site is built by N574, L575, and W578. 3 residues coordinate Ca(2+): D602, I603, and E605. The EGF-like 6; calcium-binding domain occupies 602–637 (DIDECGTGRHSCANDTICFNLDGGYDCRCPHGKNCT). 3 disulfide bridges follow: C606-C619, C613-C628, and C630-C636. N615 carries an N-linked (GlcNAc...) asparagine glycan. N621, L622, and G625 together coordinate Ca(2+). The N-linked (GlcNAc...) asparagine glycan is linked to N635. 2 consecutive VWFC domains span residues 638-693 (GDCI…PECD) and 698-756 (SQCL…PRCV).

Homotrimer. Binds to PRKCB. Interacts with NICOL1; this interaction triggers epididymal differentiation. Interacts (via the EGF domains) with ROBO3 (via Fibronectin type-III 1 domain) with a 3:3 stoichiometry; this interaction promotes oligomerization of ROBO3 resulting in the repulsion of commissural axons in the midline.

It localises to the secreted. Plays multiple roles in neural tissues, regulates neuronal proliferation, survival, differentiation, polarization, as well as axon guidance and synaptic functions. Plays an important role in axon development during neuronal differentiation through the MAPK intracellular signaling pathway. Via binding to its receptor ROBO3, plays a role in axon guidance, functioning as a repulsive axon guidance cue that contributes to commissural axon guidance to the midline. Required for neuron survival through the modulation of MAPK signaling pathways too. Involved in the regulation of hypothalamic GNRH secretion and the control of puberty. Functionally, epididymal-secreted protein that signals through a ROS1-pathway to regulate the epididymal initial segment (IS) maturation, sperm maturation and male fertility. The polypeptide is Protein kinase C-binding protein NELL2 (Homo sapiens (Human)).